The following is a 622-amino-acid chain: Palmitoyltransferase ZDHHC17 (622 aa).

At 1–294 (MADGPDEYDT…LKADKEFRQK (294 aa)) the chain is on the cytoplasmic side. A necessary and sufficient for interaction with DNAJC5 and SNAP25 region spans residues 1–295 (MADGPDEYDT…KADKEFRQKV (295 aa)). ANK repeat units lie at residues 41 to 76 (THVD…VRQP), 79 to 108 (ENVT…IVDQ), 113 to 142 (LNST…DPSL), 146 to 175 (EGCS…DVDM), 179 to 209 (NGMT…SVNL), 214 to 243 (HKNT…NVDA), and 247 to 276 (KGES…AKGY). The next 2 membrane-spanning stretches (helical) occupy residues 295–315 (VMLG…DLNI) and 316–336 (DSWL…QFLS). Residues 337–347 (KSFFDHSMHSA) are Lumenal-facing. The chain crosses the membrane as a helical span at residues 348–368 (LPLGIYLATKFWMYVTWFFWF). Over 369 to 371 (WND) the chain is Cytoplasmic. A helical membrane pass occupies residues 372-392 (LSFLSIHLPFLANSVALFYNF). At 393–470 (GKSWKSDPGI…GNCVGAGNHR (78 aa)) the chain is on the lumenal side. The DHHC domain maps to 427–477 (IFCSTCLIRKPVRSKHCGVCNRCIAKFDHHCPWVGNCVGAGNHRYFMGYLF). The S-palmitoyl cysteine intermediate role is filled by Cys457. The helical transmembrane segment at 471 to 491 (YFMGYLFFLLFMICWMIYGCV) threads the bilayer. Over 492–506 (SYWGLHCETTYTKDG) the chain is Cytoplasmic. Residues 507–526 (FWTYITQIATCSPWMFWMFL) traverse the membrane as a helical segment. The Lumenal portion of the chain corresponds to 527–529 (NSV). Residues 530-552 (FHFMWVAVLLMCQMYQITCLGIT) form a helical membrane-spanning segment. Residues 553-622 (TNERMNARRY…QISGSGYQLV (70 aa)) are Cytoplasmic-facing.

It belongs to the DHHC palmitoyltransferase family. AKR/ZDHHC17 subfamily. As to quaternary structure, interacts (via ANK repeats) with numerous proteins (via the consensus sequence motif [VIAP]-[VIT]-x-x-Q-P). Interacts (via ANK repeats) with CLIP3. Interacts (via ANK repeats) with HTT. Interacts (via ANK repeats) with DNAJC5 (via C-terminus). Interacts (via ANK repeats) with MAP6. Interacts (via ANK repeats) with SNAP23. Interacts (via ANK repeats) with SNAP25. Interacts (via ANK repeats) with EVL. Interacts with SPRED1 and SPRED3. Interacts with GPM6A and OPTN. May interact (via ANK repeats) with SPRED2. May interact with NTRK1; may regulate its localization and function. Post-translationally, autopalmitoylated. Autopalmitoylation has a regulatory role in ZDHHC17-mediated Mg(2+) transport.

The protein localises to the golgi apparatus membrane. The protein resides in the cytoplasmic vesicle membrane. Its subcellular location is the presynaptic cell membrane. The catalysed reaction is L-cysteinyl-[protein] + hexadecanoyl-CoA = S-hexadecanoyl-L-cysteinyl-[protein] + CoA. The enzyme catalyses L-cysteinyl-[protein] + tetradecanoyl-CoA = S-tetradecanoyl-L-cysteinyl-[protein] + CoA. It carries out the reaction L-cysteinyl-[protein] + octadecanoyl-CoA = S-octadecanoyl-L-cysteinyl-[protein] + CoA. Functionally, palmitoyltransferase that catalyzes the addition of palmitate onto various protein substrates and is involved in a variety of cellular processes. Has no stringent fatty acid selectivity and in addition to palmitate can also transfer onto target proteins myristate from tetradecanoyl-CoA and stearate from octadecanoyl-CoA. Palmitoyltransferase specific for a subset of neuronal proteins, including SNAP25, DLG4/PSD95, GAD2, SYT1 and HTT. Also palmitoylates neuronal protein GPM6A as well as SPRED1 and SPRED3. Could also play a role in axonogenesis through the regulation of NTRK1 and the downstream ERK1/ERK2 signaling cascade. May be involved in the sorting or targeting of critical proteins involved in the initiating events of endocytosis at the plasma membrane. May play a role in Mg(2+) transport. Could also palmitoylate DNAJC5 and regulate its localization to the Golgi membrane. Palmitoylates CASP6, thereby preventing its dimerization and subsequent activation. This is Palmitoyltransferase ZDHHC17 from Rattus norvegicus (Rat).